The sequence spans 227 residues: Cytochrome c oxidase subunit 2 (227 aa).

At 1-14 (MAYPFQLGLQDATS) the chain is on the mitochondrial intermembrane side. A helical transmembrane segment spans residues 15–45 (PIMEELLHFHDHTLMIVFLISSLVLYIISLM). Residues 46 to 59 (LTTKLTHTSTMDAQ) lie on the Mitochondrial matrix side of the membrane. A helical transmembrane segment spans residues 60 to 87 (EVETVWTILPAIILILIALPSLRILYMM). At 88 to 227 (DEINNPSLTV…YFETWSAVMV (140 aa)) the chain is on the mitochondrial intermembrane side. Positions 161, 196, 198, 200, 204, and 207 each coordinate Cu cation. A Mg(2+)-binding site is contributed by E198. Y218 bears the Phosphotyrosine mark.

It belongs to the cytochrome c oxidase subunit 2 family. In terms of assembly, component of the cytochrome c oxidase (complex IV, CIV), a multisubunit enzyme composed of 14 subunits. The complex is composed of a catalytic core of 3 subunits MT-CO1, MT-CO2 and MT-CO3, encoded in the mitochondrial DNA, and 11 supernumerary subunits COX4I, COX5A, COX5B, COX6A, COX6B, COX6C, COX7A, COX7B, COX7C, COX8 and NDUFA4, which are encoded in the nuclear genome. The complex exists as a monomer or a dimer and forms supercomplexes (SCs) in the inner mitochondrial membrane with NADH-ubiquinone oxidoreductase (complex I, CI) and ubiquinol-cytochrome c oxidoreductase (cytochrome b-c1 complex, complex III, CIII), resulting in different assemblies (supercomplex SCI(1)III(2)IV(1) and megacomplex MCI(2)III(2)IV(2)). Found in a complex with TMEM177, COA6, COX18, COX20, SCO1 and SCO2. Interacts with TMEM177 in a COX20-dependent manner. Interacts with COX20. Interacts with COX16. Cu cation serves as cofactor.

Its subcellular location is the mitochondrion inner membrane. It carries out the reaction 4 Fe(II)-[cytochrome c] + O2 + 8 H(+)(in) = 4 Fe(III)-[cytochrome c] + 2 H2O + 4 H(+)(out). Component of the cytochrome c oxidase, the last enzyme in the mitochondrial electron transport chain which drives oxidative phosphorylation. The respiratory chain contains 3 multisubunit complexes succinate dehydrogenase (complex II, CII), ubiquinol-cytochrome c oxidoreductase (cytochrome b-c1 complex, complex III, CIII) and cytochrome c oxidase (complex IV, CIV), that cooperate to transfer electrons derived from NADH and succinate to molecular oxygen, creating an electrochemical gradient over the inner membrane that drives transmembrane transport and the ATP synthase. Cytochrome c oxidase is the component of the respiratory chain that catalyzes the reduction of oxygen to water. Electrons originating from reduced cytochrome c in the intermembrane space (IMS) are transferred via the dinuclear copper A center (CU(A)) of subunit 2 and heme A of subunit 1 to the active site in subunit 1, a binuclear center (BNC) formed by heme A3 and copper B (CU(B)). The BNC reduces molecular oxygen to 2 water molecules using 4 electrons from cytochrome c in the IMS and 4 protons from the mitochondrial matrix. The chain is Cytochrome c oxidase subunit 2 (MT-CO2) from Lycalopex vetulus (Hoary fox).